A 637-amino-acid polypeptide reads, in one-letter code: Transcription factor GLABRA 3 (637 aa).

The bHLH domain occupies 437-486; sequence DETGNHAVLEKKRREKLNERFMTLRKIIPSINKIDKVSILDDTIEYLQEL. Residues 497-521 form a disordered region; sequence RESTDTETRGTMTMKRKKPCDAGER. The tract at residues 541–637 is binding with MYB0/GL1 and MYB23; it reads NVGEAEPADT…EALQRVAWIC (97 aa).

Efficient DNA binding requires dimerization with another bHLH protein. Homodimer and heterodimer with BHLH2. Interacts directly with TTG1 and MYB0/GL1 to form a complex. Its interaction with TRY prevents MYB0/GL1 binding. Interacts with MYB75/PAP1, MYB90/PAP2, TT2, CPC, MYB23 and MYB66/WER. Interacts with MYB82. As to expression, mostly expressed in roots and flowers. Also present in stems and leaves, and, to a lower extent, in hypocotyls. Expressed in epidermal root hair cells (trichoblasts) and moves to root hairless cells (atrichoblasts) by a cell-to-cell movement through plasmodesmata (at protein level).

Its subcellular location is the nucleus. Transcription activator, when associated with MYB75/PAP1, MYB90/PAP2 or TT2. Involved in epidermal cell fate specification. Negatively regulates stomata formation, but, in association with TTG1 and MYB0/GL1, promotes trichome formation, branching and endoreplication. Also regulates trichome cell wall maturation. Together with MYB66/WER, promotes the formation of non-hair cells in root epidermis cells in the N position. Whereas together with CPC, promotes the formation of hair cells in root epidermis cells in the H position by inhibiting non-hair cell formation. Also seems to play a role in the activation of anthocyanin biosynthesis, probably together with MYB75/PAP1. Activates the transcription of GL2. The protein is Transcription factor GLABRA 3 (GL3) of Arabidopsis thaliana (Mouse-ear cress).